We begin with the raw amino-acid sequence, 355 residues long: Neutral protease 2 homolog MEP6 (355 aa).

Positions 1–19 are cleaved as a signal peptide; the sequence is MRLSSSLIALVALAGQALA. The propeptide occupies 20 to 179; that stretch reads LPFNELAERD…ASAIPELNKR (160 aa). Cystine bridges form between Cys-187–Cys-259 and Cys-266–Cys-283. His-307 is a Zn(2+) binding site. Glu-308 is an active-site residue. The Zn(2+) site is built by His-311 and Asp-322.

Belongs to the peptidase M35 family. Requires Zn(2+) as cofactor.

It is found in the secreted. It catalyses the reaction Preferential cleavage of bonds with hydrophobic residues in P1'. Also 3-Asn-|-Gln-4 and 8-Gly-|-Ser-9 bonds in insulin B chain.. In terms of biological role, secreted metalloproteinase that allows assimilation of proteinaceous substrates. Shows high activities on basic nuclear substrates such as histone and protamine. May be involved in virulence. The polypeptide is Neutral protease 2 homolog MEP6 (MEP6) (Coccidioides posadasii (strain C735) (Valley fever fungus)).